The primary structure comprises 56 residues: Large ribosomal subunit protein bL32 (56 aa).

The interval 1-21 (MGVPQRRQSHARKNKRRSEWR) is disordered. A compositionally biased stretch (basic residues) spans 7-19 (RQSHARKNKRRSE).

Belongs to the bacterial ribosomal protein bL32 family.

This chain is Large ribosomal subunit protein bL32, found in Syntrophomonas wolfei subsp. wolfei (strain DSM 2245B / Goettingen).